The chain runs to 240 residues: Putative N-acetylmannosamine-6-phosphate 2-epimerase (240 aa).

Belongs to the NanE family.

The catalysed reaction is an N-acyl-D-glucosamine 6-phosphate = an N-acyl-D-mannosamine 6-phosphate. Its pathway is amino-sugar metabolism; N-acetylneuraminate degradation; D-fructose 6-phosphate from N-acetylneuraminate: step 3/5. In terms of biological role, converts N-acetylmannosamine-6-phosphate (ManNAc-6-P) to N-acetylglucosamine-6-phosphate (GlcNAc-6-P). In Vibrio cholerae serotype O1 (strain ATCC 39315 / El Tor Inaba N16961), this protein is Putative N-acetylmannosamine-6-phosphate 2-epimerase.